A 382-amino-acid polypeptide reads, in one-letter code: MENKQCDHLTDWFSTTSDASESMDTTPPLPPPTPSVDPSYSGAAADEDLYSDISEGDLEYSDCDSASESDEDDDDCLIPSKEKAREVAASFGYTVIKTLTPGSEGRVMVATKDGQPEPVVLKIGQKGTTLIEAMMLRNVNHPSVIQMKDTLVSGAITCMVLPHYSSDLYTFLTKESRRIPIDQALIIEKQILEGLRYLHAQRIIHRDVKTENIFINSVDQVCIADFGAAQFPVVEPADLGLAGTVETNAPEVLARAKYNSKADIWSAGIVLFEMLAYPSTLFEDPPSTPEEYVKSCHSQLLKIISTLKINPEEFPRDPGSRLVRGYIEYSRLERKPYTRYPCFQRVNLHIDGEFLVHKMLAFNAAMRPSAEELLSYPMFAQL.

Over residues 1 to 10 the composition is skewed to basic and acidic residues; the sequence is MENKQCDHLT. Positions 1 to 75 are disordered; the sequence is MENKQCDHLT…ASESDEDDDD (75 aa). Residues 12 to 24 show a composition bias toward polar residues; sequence WFSTTSDASESMD. Residues 45-75 show a composition bias toward acidic residues; sequence ADEDLYSDISEGDLEYSDCDSASESDEDDDD. The region spanning 93–379 is the Protein kinase domain; that stretch reads YTVIKTLTPG…AEELLSYPMF (287 aa). ATP contacts are provided by residues 99–107 and lysine 122; that span reads LTPGSEGRV. Catalysis depends on aspartate 207, which acts as the Proton acceptor.

The protein belongs to the protein kinase superfamily. Ser/Thr protein kinase family. Phosphorylated by protein 49; this phosphorylation regulates subsequent phosphorylation of proteins 26 and 29 by US3 homolog. Autophosphorylated.

It is found in the host cytoplasm. The protein localises to the host nucleus. It catalyses the reaction L-seryl-[protein] + ATP = O-phospho-L-seryl-[protein] + ADP + H(+). The enzyme catalyses L-threonyl-[protein] + ATP = O-phospho-L-threonyl-[protein] + ADP + H(+). Its function is as follows. Multifunctional serine/threonine kinase that plays a role in several processes including egress of virus particles from the nucleus, modulation of the actin cytoskeleton and inhibition of apoptosis. Phosphorylates protein 26 and 29, two critical regulators of capsid budding from nucleus to endoplasmic reticulum, thereby facilitating virion egress. Modulates and redistributes host components of the nuclear envelope, including LMNA, emerin/EMD and the nuclear matrix protein MATR3. Phosphorylates envelope glycoprotein B (gB), probably to direct it to the cell surface. Promotes virus intracellular spread by restructuring host cell cytoskeleton. Blocks host apoptosis to extend cell survival and allow efficient viral replication. Promotes viral gene expression by phosphorylating host HDAC2 to reduce viral genome silencing. This is Serine/threonine-protein kinase US3 homolog from Equine herpesvirus 1 (strain Ab4p) (EHV-1).